The sequence spans 356 residues: Sorbitol dehydrogenase (356 aa).

Position 44 (C44) interacts with Zn(2+). A substrate-binding site is contributed by Y50. Zn(2+) contacts are provided by H69 and E70. Position 155 (E155) interacts with substrate. I183, D203, and R208 together coordinate NAD(+). Phosphoserine is present on residues S210 and S224. NAD(+)-binding positions include 272 to 274 and 296 to 298; these read VGL and VFR. Residues R298 and Y299 each contribute to the substrate site.

Belongs to the zinc-containing alcohol dehydrogenase family. Homotetramer. Zn(2+) serves as cofactor. In terms of tissue distribution, expressed in lens.

It localises to the mitochondrion membrane. The protein resides in the cell projection. It is found in the cilium. Its subcellular location is the flagellum. It catalyses the reaction xylitol + NAD(+) = D-xylulose + NADH + H(+). It carries out the reaction keto-D-fructose + NADH + H(+) = D-sorbitol + NAD(+). The enzyme catalyses L-iditol + NAD(+) = keto-L-sorbose + NADH + H(+). Inhibited in vitro by metal chelators such as EDTA and 1,10-phenanthroline. Functionally, polyol dehydrogenase that catalyzes the reversible NAD(+)-dependent oxidation of various sugar alcohols. Is mostly active with xylitol, D-sorbitol (D-glucitol) and L-iditol as substrates, leading to the C2-oxidized products D-xylulose, D-fructose and L-sorbose, respectively. Is a key enzyme in the polyol pathway that interconverts glucose and fructose via sorbitol, which constitutes an important alternate route for glucose metabolism. May play a role in sperm motility by using sorbitol as an alternative energy source for sperm motility. Cannot use NADP(+) as the electron acceptor. Has no activity on ethanol, methanol, glycerol, galactitol and fructose 6-phosphate. In Bos taurus (Bovine), this protein is Sorbitol dehydrogenase (SORD).